The chain runs to 95 residues: DNA-directed RNA polymerase subunit Rpo11 (95 aa).

Belongs to the archaeal Rpo11/eukaryotic RPB11/RPC19 RNA polymerase subunit family. In terms of assembly, part of the RNA polymerase complex.

The protein localises to the cytoplasm. It carries out the reaction RNA(n) + a ribonucleoside 5'-triphosphate = RNA(n+1) + diphosphate. Functionally, DNA-dependent RNA polymerase (RNAP) catalyzes the transcription of DNA into RNA using the four ribonucleoside triphosphates as substrates. This chain is DNA-directed RNA polymerase subunit Rpo11, found in Thermococcus onnurineus (strain NA1).